The primary structure comprises 555 residues: TBCC domain-containing protein 1 (555 aa).

The C-CAP/cofactor C-like domain maps to 302 to 433 (PEVSPMVIMS…LEDHMAQVGL (132 aa)).

Belongs to the TBCC family.

The protein localises to the cytoplasm. It localises to the cytoskeleton. It is found in the microtubule organizing center. The protein resides in the centrosome. Its subcellular location is the spindle pole. Its function is as follows. May play a role in the regulation of centrosome and Golgi apparatus positioning. This Gallus gallus (Chicken) protein is TBCC domain-containing protein 1 (TBCCD1).